The primary structure comprises 100 residues: Sec-independent protein translocase protein TatA (100 aa).

A helical membrane pass occupies residues 1–21; it reads MGALKPWHIAVLVVVLILLFG. The span at 44–55 shows a compositional bias: basic and acidic residues; it reads KSLHDDDRDLAE. The interval 44-100 is disordered; it reads KSLHDDDRDLAEKANAQAGYQPLPPQVQQEPYPQQTPYQAPPQQQPVVDPVQRARDS. Residues 69-81 show a composition bias toward low complexity; the sequence is QVQQEPYPQQTPY.

Belongs to the TatA/E family. As to quaternary structure, the Tat system comprises two distinct complexes: a TatABC complex, containing multiple copies of TatA, TatB and TatC subunits, and a separate TatA complex, containing only TatA subunits. Substrates initially bind to the TatABC complex, which probably triggers association of the separate TatA complex to form the active translocon.

Its subcellular location is the cell membrane. Its function is as follows. Part of the twin-arginine translocation (Tat) system that transports large folded proteins containing a characteristic twin-arginine motif in their signal peptide across membranes. TatA could form the protein-conducting channel of the Tat system. In Salinispora arenicola (strain CNS-205), this protein is Sec-independent protein translocase protein TatA.